A 309-amino-acid polypeptide reads, in one-letter code: Uricase-2 isozyme 1 (309 aa).

Residues Lys-18 and Thr-64 each act as charge relay system in the active site. Residues Thr-64, Asp-65, Phe-166, Arg-183, Val-238, Gln-239, and Asn-265 each contribute to the urate site. Residue His-267 is the Charge relay system of the active site. Positions 307 to 309 (SKL) match the Microbody targeting signal motif.

It belongs to the uricase family. Homotetramer. Post-translationally, the N-terminus is blocked. Expressed predominantly in the uninfected cells of the central tissue of the root nodule.

It localises to the peroxisome. It carries out the reaction urate + O2 + H2O = 5-hydroxyisourate + H2O2. The protein operates within purine metabolism; urate degradation; (S)-allantoin from urate: step 1/3. Functionally, catalyzes the oxidation of uric acid to 5-hydroxyisourate, which is further processed to form (S)-allantoin. The chain is Uricase-2 isozyme 1 from Glycine max (Soybean).